Reading from the N-terminus, the 319-residue chain is 4-hydroxy-3-methylbut-2-enyl diphosphate reductase (319 aa).

Residue Cys17 participates in [4Fe-4S] cluster binding. His46 and His79 together coordinate (2E)-4-hydroxy-3-methylbut-2-enyl diphosphate. Positions 46 and 79 each coordinate dimethylallyl diphosphate. The isopentenyl diphosphate site is built by His46 and His79. Cys101 is a [4Fe-4S] cluster binding site. Position 129 (His129) interacts with (2E)-4-hydroxy-3-methylbut-2-enyl diphosphate. His129 lines the dimethylallyl diphosphate pocket. His129 provides a ligand contact to isopentenyl diphosphate. Residue Glu131 is the Proton donor of the active site. Thr170 is a binding site for (2E)-4-hydroxy-3-methylbut-2-enyl diphosphate. Residue Cys200 participates in [4Fe-4S] cluster binding. Residues Ser228, Ser229, Asn230, and Ser273 each coordinate (2E)-4-hydroxy-3-methylbut-2-enyl diphosphate. Dimethylallyl diphosphate is bound by residues Ser228, Ser229, Asn230, and Ser273. Ser228, Ser229, Asn230, and Ser273 together coordinate isopentenyl diphosphate.

This sequence belongs to the IspH family. [4Fe-4S] cluster is required as a cofactor.

It catalyses the reaction isopentenyl diphosphate + 2 oxidized [2Fe-2S]-[ferredoxin] + H2O = (2E)-4-hydroxy-3-methylbut-2-enyl diphosphate + 2 reduced [2Fe-2S]-[ferredoxin] + 2 H(+). The catalysed reaction is dimethylallyl diphosphate + 2 oxidized [2Fe-2S]-[ferredoxin] + H2O = (2E)-4-hydroxy-3-methylbut-2-enyl diphosphate + 2 reduced [2Fe-2S]-[ferredoxin] + 2 H(+). Its pathway is isoprenoid biosynthesis; dimethylallyl diphosphate biosynthesis; dimethylallyl diphosphate from (2E)-4-hydroxy-3-methylbutenyl diphosphate: step 1/1. It participates in isoprenoid biosynthesis; isopentenyl diphosphate biosynthesis via DXP pathway; isopentenyl diphosphate from 1-deoxy-D-xylulose 5-phosphate: step 6/6. Its function is as follows. Catalyzes the conversion of 1-hydroxy-2-methyl-2-(E)-butenyl 4-diphosphate (HMBPP) into a mixture of isopentenyl diphosphate (IPP) and dimethylallyl diphosphate (DMAPP). Acts in the terminal step of the DOXP/MEP pathway for isoprenoid precursor biosynthesis. This Cereibacter sphaeroides (strain ATCC 17025 / ATH 2.4.3) (Rhodobacter sphaeroides) protein is 4-hydroxy-3-methylbut-2-enyl diphosphate reductase.